Reading from the N-terminus, the 1432-residue chain is MGARASVLSGGKLDTWERIRLRPGGKKKYALKHLIWASRELERFTLNPGLLETSEGCKQIIGQLQPSIQTGSEEIRSLYNTVATLYCVHERIEVKDTKEAVEKMEEEQNKSKKKTQQAAADSSQVSQNYPIVQNLQGQMVHQAISPRTLNAWVKVIEEKAFSPEVIPMFSALSEGATPQDLNTMLNTVGGHQAAMQMLKETINDEAAEWDRLHPVHAGPVAPGQMREPRGSDIAGTTSTLQEQIAWMTSNPPIPVGEIYKRWIILGLNKIVRMYSPVSILDIRQGPKEPFRDYVDRFYKTLRAEQASQDVKNWMTETLLVQNANPDCKTILKALGPQATLEEMMTACQGVGGPGHKARVLAEAMSQVTGSATAVMMQRGNFKGPRKSIKCFNCGKEGHTAKNCRAPRKKGCWKCGREGHQMKDCTERQANFLREDLAFPQGKAGEFSSEQTRANSPTSRELRVWGGDNPLSETGAERQGTVSFSFPQITLWQRPLVTIKIGGQLKEALLDTGADDTVLEEINLPGKWKPKMIGGIGGFIKVRQYDQILIEICGYKAMGTVLVGPTPVNIIGRNLLTQIGCTLNFPISPIETVPVKLKPGMDGPKVKQWPLTEEKIKALTEICTEMEKEGKISRIGPENPYNTPIFAIKKKDSTKWRKLVDFRELNKRTQDFWEVQLGIPHPAGLKKKKSVTVLDVGDAYFSVPLDEDFRKYTAFTIPSINNETPGIRYQYNVLPQGWKGSPAIFQSSMTKILEPFRKQNPEIVIYQYMDDLYVGSDLEIGQHRTKIEELREHLLRWGFTTPDKKHQKEPPFLWMGYELHPDKWTVQPINLPEKESWTVNDIQKLVGKLNWASQIYAGIKVKQLCKLLRGTKALTEVVPLTEEAELELAENREILKEPVHGVYYDPSKDLIAELQKQGDGQWTYQIYQEPFKNLKTGKYARTRGAHTNDVKQLTEAVQKIATESIVIWGKTPKFKLPIQKETWETWWIEYWQATWIPEWEFVNTPPLVKLWYQLEKEPIIGAETFYVDGAANRETKLGKAGYVTDRGRQKVVPFTDTTNQKTELQAINLALQDSGLEVNIVTDSQYALGIIQAQPDKSESELVSQIIEQLIKKEKVYLAWVPAHKGIGGNEQVDKLVSQGIRKVLFLDGIDKAQEEHEKYHNNWRAMASDFNLPPVVAKEIVASCDKCQLKGEAMHGQVDCSPGIWQLDCTHLEGKVILVAVHVASGYIEAEVIPAETGQETAYFLLKLAGRWPVKVVHTDNGSNFTSATVKAACWWAGIKQEFGIPYNPQSQGVVESMNKELKKIIGQVRDQAEHLKTAVQMAVFIHNFKRKGGIGGYSAGERIIDIIATDIQTRELQKQIIKIQNFRVYYRDSRDPIWKGPAKLLWKGEGAVVIQDNSDIKVVPRRKVKIIRDYGKQMAGDDCVASRQDED.

Glycine 2 is lipidated: N-myristoyl glycine; by host. The interaction with Gp41 stretch occupies residues 7–31 (VLSGGKLDTWERIRLRPGGKKKYAL). The tract at residues 8-43 (LSGGKLDTWERIRLRPGGKKKYALKHLIWASRELER) is interaction with host CALM1. The interaction with host AP3D1 stretch occupies residues 12–19 (KLDTWERI). The segment at 14 to 33 (DTWERIRLRPGGKKKYALKH) is interaction with membrane phosphatidylinositol 4,5-bisphosphate and RNA. A Nuclear export signal motif is present at residues 16–22 (WERIRLR). Positions 26–32 (KKKYALK) match the Nuclear localization signal motif. Residues 73 to 77 (EEIRS) form an interaction with membrane phosphatidylinositol 4,5-bisphosphate region. The disordered stretch occupies residues 102–125 (EKMEEEQNKSKKKTQQAAADSSQV). Residues 116 to 125 (QQAAADSSQV) are compositionally biased toward low complexity. Tyrosine 129 carries the phosphotyrosine; by host modification. The tract at residues 186–224 (NTVGGHQAAMQMLKETINDEAAEWDRLHPVHAGPVAPGQ) is interaction with human PPIA/CYPA and NUP153. Residues 274 to 360 (YSPVSILDIR…GGPGHKARVL (87 aa)) form a dimerization/Multimerization of capsid protein p24 region. CCHC-type zinc fingers lie at residues 388–405 (IKCF…NCRA) and 409–426 (KGCW…DCTE). The interval 486 to 490 (PQITL) is dimerization of protease. The 70-residue stretch at 505–574 (KEALLDTGAD…TPVNIIGRNL (70 aa)) folds into the Peptidase A2 domain. Aspartate 510 functions as the For protease activity; shared with dimeric partner in the catalytic mechanism. Dimerization of protease regions lie at residues 534–540 (GIGGFIK) and 573–585 (NLLT…LNFP). A Reverse transcriptase domain is found at 628-818 (EGKISRIGPE…PPFLWMGYEL (191 aa)). Residues aspartate 694, aspartate 769, and aspartate 770 each coordinate Mg(2+). The interval 811–819 (FLWMGYELH) is RT 'primer grip'. Residues 982–998 (WETWWIEYWQATWIPEW) carry the Tryptophan repeat motif motif. The region spanning 1018–1141 (IIGAETFYVD…VDKLVSQGIR (124 aa)) is the RNase H type-1 domain. Mg(2+)-binding residues include aspartate 1027, glutamate 1062, aspartate 1082, and aspartate 1133. Residues 1147 to 1188 (DGIDKAQEEHEKYHNNWRAMASDFNLPPVVAKEIVASCDKCQ) form an Integrase-type zinc finger. The Zn(2+) site is built by histidine 1156, histidine 1160, cysteine 1184, and cysteine 1187. The Integrase catalytic domain maps to 1198 to 1348 (VDCSPGIWQL…SAGERIIDII (151 aa)). Mg(2+) is bound by residues aspartate 1208, aspartate 1260, and glutamate 1296. Positions 1367 to 1414 (FRVYYRDSRDPIWKGPAKLLWKGEGAVVIQDNSDIKVVPRRKVKIIRD) form a DNA-binding region, integrase-type.

Homotrimer; further assembles as hexamers of trimers. Interacts with gp41 (via C-terminus). Interacts with host CALM1; this interaction induces a conformational change in the Matrix protein, triggering exposure of the myristate group. Interacts with host AP3D1; this interaction allows the polyprotein trafficking to multivesicular bodies during virus assembly. Part of the pre-integration complex (PIC) which is composed of viral genome, matrix protein, Vpr and integrase. As to quaternary structure, homodimer; the homodimer further multimerizes as homohexamers or homopentamers. Interacts with human PPIA/CYPA; This interaction stabilizes the capsid. Interacts with human NUP153. Interacts with host PDZD8; this interaction stabilizes the capsid. Interacts with monkey TRIM5; this interaction destabilizes the capsid. In terms of assembly, homodimer, whose active site consists of two apposed aspartic acid residues. Heterodimer of p66 RT and p51 RT (RT p66/p51). Heterodimerization of RT is essential for DNA polymerase activity. The overall folding of the subdomains is similar in p66 RT and p51 RT but the spatial arrangements of the subdomains are dramatically different. As to quaternary structure, homotetramer; may further associate as a homohexadecamer. Part of the pre-integration complex (PIC) which is composed of viral genome, matrix protein, Vpr and integrase. Interacts with human SMARCB1/INI1 and human PSIP1/LEDGF isoform 1. Interacts with human KPNA3; this interaction might play a role in nuclear import of the pre-integration complex. Interacts with human NUP153; this interaction might play a role in nuclear import of the pre-integration complex. It depends on Mg(2+) as a cofactor. Specific enzymatic cleavages by the viral protease yield mature proteins. The protease is released by autocatalytic cleavage. The polyprotein is cleaved during and after budding, this process is termed maturation. Proteolytic cleavage of p66 RT removes the RNase H domain to yield the p51 RT subunit. Nucleocapsid protein p7 might be further cleaved after virus entry. In terms of processing, tyrosine phosphorylated presumably in the virion by a host kinase. Phosphorylation is apparently not a major regulator of membrane association. Post-translationally, phosphorylated possibly by host MAPK1; this phosphorylation is necessary for Pin1-mediated virion uncoating. Methylated by host PRMT6, impairing its function by reducing RNA annealing and the initiation of reverse transcription.

It is found in the host cell membrane. The protein resides in the host endosome. The protein localises to the host multivesicular body. Its subcellular location is the virion membrane. It localises to the host nucleus. It is found in the host cytoplasm. The protein resides in the virion. The catalysed reaction is Specific for a P1 residue that is hydrophobic, and P1' variable, but often Pro.. The enzyme catalyses Endohydrolysis of RNA in RNA/DNA hybrids. Three different cleavage modes: 1. sequence-specific internal cleavage of RNA. Human immunodeficiency virus type 1 and Moloney murine leukemia virus enzymes prefer to cleave the RNA strand one nucleotide away from the RNA-DNA junction. 2. RNA 5'-end directed cleavage 13-19 nucleotides from the RNA end. 3. DNA 3'-end directed cleavage 15-20 nucleotides away from the primer terminus.. It carries out the reaction 3'-end directed exonucleolytic cleavage of viral RNA-DNA hybrid.. It catalyses the reaction DNA(n) + a 2'-deoxyribonucleoside 5'-triphosphate = DNA(n+1) + diphosphate. The viral protease is inhibited by many synthetic protease inhibitors (PIs), such as amprenavir, atazanavir, indinavir, loprinavir, nelfinavir, ritonavir and saquinavir. RT can be inhibited either by nucleoside RT inhibitors (NRTIs) or by non nucleoside RT inhibitors (NNRTIs). NRTIs act as chain terminators, whereas NNRTIs inhibit DNA polymerization by binding a small hydrophobic pocket near the RT active site and inducing an allosteric change in this region. Classical NRTIs are abacavir, adefovir (PMEA), didanosine (ddI), lamivudine (3TC), stavudine (d4T), tenofovir (PMPA), zalcitabine (ddC), and zidovudine (AZT). Classical NNRTIs are atevirdine (BHAP U-87201E), delavirdine, efavirenz (DMP-266), emivirine (I-EBU), and nevirapine (BI-RG-587). The tritherapies used as a basic effective treatment of AIDS associate two NRTIs and one NNRTI. Use of protease inhibitors in tritherapy regimens permit more ambitious therapeutic strategies. Its function is as follows. Gag-Pol polyprotein and Gag polyprotein may regulate their own translation, by the binding genomic RNA in the 5'-UTR. At low concentration, Gag-Pol and Gag would promote translation, whereas at high concentration, the polyproteins encapsidate genomic RNA and then shut off translation. In terms of biological role, matrix protein p17 targets Gag and Gag-pol polyproteins to the plasma membrane via a multipartite membrane-binding signal, that includes its myristoylated N-terminus. Matrix protein is part of the pre-integration complex. Implicated in the release from host cell mediated by Vpu. Binds to RNA. Forms the conical core that encapsulates the genomic RNA-nucleocapsid complex in the virion. Most core are conical, with only 7% tubular. The core is constituted by capsid protein hexamer subunits. The core is disassembled soon after virion entry. Host restriction factors such as TRIM5-alpha or TRIMCyp bind retroviral capsids and cause premature capsid disassembly, leading to blocks in reverse transcription. Capsid restriction by TRIM5 is one of the factors which restricts HIV-1 to the human species. Host PIN1 apparently facilitates the virion uncoating. On the other hand, interactions with PDZD8 or CYPA stabilize the capsid. Functionally, nucleocapsid protein p7 encapsulates and protects viral dimeric unspliced genomic RNA (gRNA). Binds these RNAs through its zinc fingers. Acts as a nucleic acid chaperone which is involved in rearangement of nucleic acid secondary structure during gRNA retrotranscription. Also facilitates template switch leading to recombination. As part of the polyprotein, participates in gRNA dimerization, packaging, tRNA incorporation and virion assembly. Its function is as follows. The aspartyl protease mediates proteolytic cleavages of Gag and Gag-Pol polyproteins during or shortly after the release of the virion from the plasma membrane. Cleavages take place as an ordered, step-wise cascade to yield mature proteins. This process is called maturation. Displays maximal activity during the budding process just prior to particle release from the cell. Also cleaves Nef and Vif, probably concomitantly with viral structural proteins on maturation of virus particles. Hydrolyzes host EIF4GI and PABP1 in order to shut off the capped cellular mRNA translation. The resulting inhibition of cellular protein synthesis serves to ensure maximal viral gene expression and to evade host immune response. Also mediates cleavage of host YTHDF3. Mediates cleavage of host CARD8, thereby activating the CARD8 inflammasome, leading to the clearance of latent HIV-1 in patient CD4(+) T-cells after viral reactivation; in contrast, HIV-1 can evade CARD8-sensing when its protease remains inactive in infected cells prior to viral budding. In terms of biological role, reverse transcriptase/ribonuclease H (RT) is a multifunctional enzyme that converts the viral RNA genome into dsDNA in the cytoplasm, shortly after virus entry into the cell. This enzyme displays a DNA polymerase activity that can copy either DNA or RNA templates, and a ribonuclease H (RNase H) activity that cleaves the RNA strand of RNA-DNA heteroduplexes in a partially processive 3' to 5' endonucleasic mode. Conversion of viral genomic RNA into dsDNA requires many steps. A tRNA(3)-Lys binds to the primer-binding site (PBS) situated at the 5'-end of the viral RNA. RT uses the 3' end of the tRNA primer to perform a short round of RNA-dependent minus-strand DNA synthesis. The reading proceeds through the U5 region and ends after the repeated (R) region which is present at both ends of viral RNA. The portion of the RNA-DNA heteroduplex is digested by the RNase H, resulting in a ssDNA product attached to the tRNA primer. This ssDNA/tRNA hybridizes with the identical R region situated at the 3' end of viral RNA. This template exchange, known as minus-strand DNA strong stop transfer, can be either intra- or intermolecular. RT uses the 3' end of this newly synthesized short ssDNA to perform the RNA-dependent minus-strand DNA synthesis of the whole template. RNase H digests the RNA template except for two polypurine tracts (PPTs) situated at the 5'-end and near the center of the genome. It is not clear if both polymerase and RNase H activities are simultaneous. RNase H probably can proceed both in a polymerase-dependent (RNA cut into small fragments by the same RT performing DNA synthesis) and a polymerase-independent mode (cleavage of remaining RNA fragments by free RTs). Secondly, RT performs DNA-directed plus-strand DNA synthesis using the PPTs that have not been removed by RNase H as primers. PPTs and tRNA primers are then removed by RNase H. The 3' and 5' ssDNA PBS regions hybridize to form a circular dsDNA intermediate. Strand displacement synthesis by RT to the PBS and PPT ends produces a blunt ended, linear dsDNA copy of the viral genome that includes long terminal repeats (LTRs) at both ends. Catalyzes viral DNA integration into the host chromosome, by performing a series of DNA cutting and joining reactions. This enzyme activity takes place after virion entry into a cell and reverse transcription of the RNA genome in dsDNA. The first step in the integration process is 3' processing. This step requires a complex comprising the viral genome, matrix protein, Vpr and integrase. This complex is called the pre-integration complex (PIC). The integrase protein removes 2 nucleotides from each 3' end of the viral DNA, leaving recessed CA OH's at the 3' ends. In the second step, the PIC enters cell nucleus. This process is mediated through integrase and Vpr proteins, and allows the virus to infect a non dividing cell. This ability to enter the nucleus is specific of lentiviruses, other retroviruses cannot and rely on cell division to access cell chromosomes. In the third step, termed strand transfer, the integrase protein joins the previously processed 3' ends to the 5' ends of strands of target cellular DNA at the site of integration. The 5'-ends are produced by integrase-catalyzed staggered cuts, 5 bp apart. A Y-shaped, gapped, recombination intermediate results, with the 5'-ends of the viral DNA strands and the 3' ends of target DNA strands remaining unjoined, flanking a gap of 5 bp. The last step is viral DNA integration into host chromosome. This involves host DNA repair synthesis in which the 5 bp gaps between the unjoined strands are filled in and then ligated. Since this process occurs at both cuts flanking the HIV genome, a 5 bp duplication of host DNA is produced at the ends of HIV-1 integration. Alternatively, Integrase may catalyze the excision of viral DNA just after strand transfer, this is termed disintegration. This chain is Gag-Pol polyprotein (gag-pol), found in Homo sapiens (Human).